The following is a 267-amino-acid chain: Glucosamine-6-phosphate deaminase (267 aa).

Aspartate 72 (proton acceptor; for enolization step) is an active-site residue. Aspartate 141 acts as the For ring-opening step in catalysis. Histidine 143 acts as the Proton acceptor; for ring-opening step in catalysis. The active-site For ring-opening step is glutamate 148.

Belongs to the glucosamine/galactosamine-6-phosphate isomerase family. NagB subfamily. As to quaternary structure, homohexamer.

It carries out the reaction alpha-D-glucosamine 6-phosphate + H2O = beta-D-fructose 6-phosphate + NH4(+). It functions in the pathway amino-sugar metabolism; N-acetylneuraminate degradation; D-fructose 6-phosphate from N-acetylneuraminate: step 5/5. With respect to regulation, allosterically activated by N-acetylglucosamine 6-phosphate (GlcNAc6P). Its function is as follows. Catalyzes the reversible isomerization-deamination of glucosamine 6-phosphate (GlcN6P) to form fructose 6-phosphate (Fru6P) and ammonium ion. This is Glucosamine-6-phosphate deaminase from Mannheimia succiniciproducens (strain KCTC 0769BP / MBEL55E).